Reading from the N-terminus, the 408-residue chain is Probable serine/threonine-protein kinase PBL16 (408 aa).

Residue Gly2 is the site of N-myristoyl glycine attachment. A lipid anchor (S-palmitoyl cysteine) is attached at Cys4. The interval 17 to 50 (ANAKSESPKEQSPTVEDKHIKEVQKLPSNPKEVE) is disordered. Positions 18–30 (NAKSESPKEQSPT) are enriched in polar residues. Positions 31–40 (VEDKHIKEVQ) are enriched in basic and acidic residues. Thr65 is modified (phosphothreonine). One can recognise a Protein kinase domain in the interval 76 to 360 (FRQDRVLGGG…DIVDSLEPLQ (285 aa)). ATP is bound by residues 82 to 90 (LGGGGFGSV) and Lys113. Phosphotyrosine is present on Tyr159. Residue Asp209 is the Proton acceptor of the active site. Ser213 and Ser243 each carry phosphoserine. 2 positions are modified to phosphothreonine: Thr244 and Thr249. Phosphotyrosine is present on Tyr257.

The protein belongs to the protein kinase superfamily. Ser/Thr protein kinase family. Palmitoylation at Cys-4 and Cys-6 are required for plasma membrane location.

Its subcellular location is the cell membrane. The catalysed reaction is L-seryl-[protein] + ATP = O-phospho-L-seryl-[protein] + ADP + H(+). The enzyme catalyses L-threonyl-[protein] + ATP = O-phospho-L-threonyl-[protein] + ADP + H(+). Its function is as follows. May be involved in plant defense signaling. The protein is Probable serine/threonine-protein kinase PBL16 of Arabidopsis thaliana (Mouse-ear cress).